Here is a 203-residue protein sequence, read N- to C-terminus: Small ribosomal subunit protein uS7 (203 aa).

A disordered region spans residues M1–K22.

This sequence belongs to the universal ribosomal protein uS7 family. In terms of assembly, part of the 30S ribosomal subunit.

One of the primary rRNA binding proteins, it binds directly to 16S rRNA where it nucleates assembly of the head domain of the 30S subunit. Is located at the subunit interface close to the decoding center. The chain is Small ribosomal subunit protein uS7 from Halococcus morrhuae (Micrococcus morrhuae).